The primary structure comprises 446 residues: Putative ZDHHC-type palmitoyltransferase 2 (446 aa).

Disordered regions lie at residues 1–33 and 56–83; these read MNLY…INNN and QIIN…HNNP. N-linked (GlcNAc...) asparagine glycosylation is found at Asn5, Asn8, Asn14, and Asn21. The segment covering 56-81 has biased composition (low complexity); the sequence is QIINKNNNNNHNRNNNNNNNNNNNHN. 4 N-linked (GlcNAc...) asparagine glycosylation sites follow: Asn141, Asn145, Asn159, and Asn165. Helical transmembrane passes span 178–198, 210–230, 305–325, 349–369, and 410–430; these read IVIF…IFPW, IHSF…YLCS, YFVL…TLLI, LFLL…IMAL, and IISN…LPTI. A DHHC domain is found at 261-311; the sequence is KWCNKCNHQKPERAHHCRYCNRCVLRMDHHCQWLQNCIGLFNQKYFVLFLF.

The protein belongs to the DHHC palmitoyltransferase family.

It localises to the membrane. It catalyses the reaction L-cysteinyl-[protein] + hexadecanoyl-CoA = S-hexadecanoyl-L-cysteinyl-[protein] + CoA. The protein is Putative ZDHHC-type palmitoyltransferase 2 of Dictyostelium discoideum (Social amoeba).